A 336-amino-acid chain; its full sequence is N-lysine methyltransferase KMT5A-B (336 aa).

Disordered stretches follow at residues 1-107 (MGRG…SSKQ) and 141-165 (QSQK…NRKL). The segment covering 67-93 (SVAHHESKNLGKPTTETRKKAEVEKKR) has biased composition (basic and acidic residues). Polar residues predominate over residues 95-104 (SSATELSVKS). Over residues 146–162 (VKNKSQRRKAQRKKSPN) the composition is skewed to basic residues. In terms of domain architecture, SET spans 200–321 (DGMKMDMIIG…VGEELLYDYG (122 aa)). S-adenosyl-L-methionine contacts are provided by residues 210-212 (KGR), Tyr-255, and 282-283 (NH).

The protein belongs to the class V-like SAM-binding methyltransferase superfamily. Histone-lysine methyltransferase family. PR/SET subfamily. Post-translationally, phosphorylated during mitosis.

It localises to the nucleus. Its subcellular location is the chromosome. It carries out the reaction L-lysyl(20)-[histone H4] + S-adenosyl-L-methionine = N(6)-methyl-L-lysyl(20)-[histone H4] + S-adenosyl-L-homocysteine + H(+). The enzyme catalyses L-lysyl-[protein] + S-adenosyl-L-methionine = N(6)-methyl-L-lysyl-[protein] + S-adenosyl-L-homocysteine + H(+). In terms of biological role, protein-lysine N-methyltransferase that monomethylates both histones and non-histone proteins. Specifically monomethylates 'Lys-20' of histone H4 (H4K20me1). H4K20me1 is enriched during mitosis and represents a specific tag for epigenetic transcriptional repression. Mainly functions in euchromatin regions, thereby playing a central role in the silencing of euchromatic genes. Required for cell proliferation, probably by contributing to the maintenance of proper higher-order structure of DNA during mitosis. Involved in chromosome condensation and proper cytokinesis. This is N-lysine methyltransferase KMT5A-B from Xenopus laevis (African clawed frog).